Consider the following 1136-residue polypeptide: Unconventional myosin-Ib (1136 aa).

Residues isoleucine 15–lysine 701 form the Myosin motor domain. Phosphoserine is present on serine 60. Glycine 108–threonine 115 is a binding site for ATP. Residue lysine 287 forms a Glycyl lysine isopeptide (Lys-Gly) (interchain with G-Cter in SUMO1); alternate linkage. Lysine 287 is covalently cross-linked (Glycyl lysine isopeptide (Lys-Gly) (interchain with G-Cter in SUMO2); alternate). The interval tyrosine 592–asparagine 599 is actin-binding. 6 consecutive IQ domains span residues leucine 704–arginine 729, serine 730–isoleucine 750, isoleucine 750–arginine 778, lysine 780–arginine 807, asparagine 808–arginine 837, and arginine 837–glycine 866. The TH1 domain maps to lysine 952–proline 1136.

It belongs to the TRAFAC class myosin-kinesin ATPase superfamily. Myosin family.

Its function is as follows. Motor protein that may participate in process critical to neuronal development and function such as cell migration, neurite outgrowth and vesicular transport. This Rattus norvegicus (Rat) protein is Unconventional myosin-Ib (Myo1b).